The primary structure comprises 854 residues: DNA mismatch repair protein MutS (854 aa).

615–622 (GPNMGGKS) lines the ATP pocket.

The protein belongs to the DNA mismatch repair MutS family.

Functionally, this protein is involved in the repair of mismatches in DNA. It is possible that it carries out the mismatch recognition step. This protein has a weak ATPase activity. This chain is DNA mismatch repair protein MutS, found in Proteus mirabilis (strain HI4320).